The following is a 540-amino-acid chain: Peptide chain release factor 3 (540 aa).

The 270-residue stretch at 14 to 283 (NQRRNFAIIS…AFLDYALKPI (270 aa)) folds into the tr-type G domain. Residues 23 to 30 (SHPDAGKT), 91 to 95 (DTPGH), and 145 to 148 (NKLD) each bind GTP.

The protein belongs to the TRAFAC class translation factor GTPase superfamily. Classic translation factor GTPase family. PrfC subfamily.

The protein localises to the cytoplasm. Its function is as follows. Increases the formation of ribosomal termination complexes and stimulates activities of RF-1 and RF-2. It binds guanine nucleotides and has strong preference for UGA stop codons. It may interact directly with the ribosome. The stimulation of RF-1 and RF-2 is significantly reduced by GTP and GDP, but not by GMP. The chain is Peptide chain release factor 3 from Gloeothece citriformis (strain PCC 7424) (Cyanothece sp. (strain PCC 7424)).